A 278-amino-acid polypeptide reads, in one-letter code: Sulfur carrier protein FdhD (278 aa).

Catalysis depends on Cys121, which acts as the Cysteine persulfide intermediate. 260–265 (FCKPGR) lines the Mo-bis(molybdopterin guanine dinucleotide) pocket.

This sequence belongs to the FdhD family.

The protein resides in the cytoplasm. Required for formate dehydrogenase (FDH) activity. Acts as a sulfur carrier protein that transfers sulfur from IscS to the molybdenum cofactor prior to its insertion into FDH. The protein is Sulfur carrier protein FdhD of Salmonella schwarzengrund (strain CVM19633).